The sequence spans 101 residues: Small ribosomal subunit protein bS18c (101 aa).

The span at 1-19 (MDKSKQLFRKSKRSFRRRL) shows a compositional bias: basic residues. Residues 1–23 (MDKSKQLFRKSKRSFRRRLPPIG) form a disordered region.

It belongs to the bacterial ribosomal protein bS18 family. In terms of assembly, part of the 30S ribosomal subunit.

The protein resides in the plastid. The protein localises to the chloroplast. In Acorus calamus (Sweet flag), this protein is Small ribosomal subunit protein bS18c.